A 604-amino-acid chain; its full sequence is Acetylcholinesterase 4 (604 aa).

The N-terminal stretch at 1 to 23 (MKPKLVFLPFLIFITVFIEESEA) is a signal peptide. A disulfide bond links Cys-88 and Cys-115. Asn-96 and Asn-128 each carry an N-linked (GlcNAc...) asparagine glycan. The active-site Acyl-ester intermediate is Ser-219. A disulfide bond links Cys-273 and Cys-284. Asn-274 and Asn-299 each carry an N-linked (GlcNAc...) asparagine glycan. Catalysis depends on Glu-347, which acts as the Charge relay system. 2 N-linked (GlcNAc...) asparagine glycosylation sites follow: Asn-400 and Asn-446. Cys-426 and Cys-561 form a disulfide bridge. The Charge relay system role is filled by His-477.

This sequence belongs to the type-B carboxylesterase/lipase family.

It is found in the synapse. Its subcellular location is the secreted. The protein localises to the cell membrane. It carries out the reaction acetylcholine + H2O = choline + acetate + H(+). Its function is as follows. Rapidly hydrolyzes choline released into the synapse. The protein is Acetylcholinesterase 4 (ace-4) of Caenorhabditis briggsae.